The following is a 371-amino-acid chain: 4-hydroxyphenylpyruvate dioxygenase-like protein (371 aa).

2 VOC domains span residues 7–135 and 160–328; these read RLCH…LLQR and HVDH…VFTK. 3 residues coordinate Fe cation: histidine 163, histidine 258, and glutamate 339.

Belongs to the 4HPPD family. Fe cation is required as a cofactor.

It is found in the mitochondrion. It catalyses the reaction 3-(4-hydroxyphenyl)pyruvate + O2 = (S)-4-hydroxymandelate + CO2. Iron-dependent dioxygenase that catalyzes the conversion of 4-hydroxyphenylpyruvate (4-HPPA) to 4-hydroxymandelate (4-HMA) in the mitochondria, one of the steps in the biosynthesis of coenzyme Q10 from tyrosine. This is 4-hydroxyphenylpyruvate dioxygenase-like protein from Rattus norvegicus (Rat).